A 156-amino-acid polypeptide reads, in one-letter code: Endoribonuclease YbeY (156 aa).

Zn(2+) contacts are provided by histidine 117, histidine 121, and histidine 127.

Belongs to the endoribonuclease YbeY family. Requires Zn(2+) as cofactor.

The protein localises to the cytoplasm. In terms of biological role, single strand-specific metallo-endoribonuclease involved in late-stage 70S ribosome quality control and in maturation of the 3' terminus of the 16S rRNA. The protein is Endoribonuclease YbeY of Shewanella pealeana (strain ATCC 700345 / ANG-SQ1).